The sequence spans 458 residues: UDP-N-acetylmuramate--L-alanine ligase (458 aa).

118 to 124 (GTHGKTT) lines the ATP pocket.

Belongs to the MurCDEF family.

The protein resides in the cytoplasm. It carries out the reaction UDP-N-acetyl-alpha-D-muramate + L-alanine + ATP = UDP-N-acetyl-alpha-D-muramoyl-L-alanine + ADP + phosphate + H(+). It participates in cell wall biogenesis; peptidoglycan biosynthesis. Cell wall formation. The polypeptide is UDP-N-acetylmuramate--L-alanine ligase (Clostridium botulinum (strain ATCC 19397 / Type A)).